Here is a 212-residue protein sequence, read N- to C-terminus: Orotate phosphoribosyltransferase (212 aa).

5-phospho-alpha-D-ribose 1-diphosphate is bound by residues R97, K101, H103, and 123 to 131; that span reads DDLISTGGS. S127 contacts orotate.

This sequence belongs to the purine/pyrimidine phosphoribosyltransferase family. PyrE subfamily. Homodimer. The cofactor is Mg(2+).

It catalyses the reaction orotidine 5'-phosphate + diphosphate = orotate + 5-phospho-alpha-D-ribose 1-diphosphate. It participates in pyrimidine metabolism; UMP biosynthesis via de novo pathway; UMP from orotate: step 1/2. Catalyzes the transfer of a ribosyl phosphate group from 5-phosphoribose 1-diphosphate to orotate, leading to the formation of orotidine monophosphate (OMP). This chain is Orotate phosphoribosyltransferase, found in Lactiplantibacillus plantarum (strain ATCC BAA-793 / NCIMB 8826 / WCFS1) (Lactobacillus plantarum).